A 94-amino-acid chain; its full sequence is Large ribosomal subunit protein bL27 (94 aa).

A propeptide spanning residues 1 to 9 (MLKLNLQFF) is cleaved from the precursor.

It belongs to the bacterial ribosomal protein bL27 family. Post-translationally, the N-terminus is cleaved by ribosomal processing cysteine protease Prp.

The polypeptide is Large ribosomal subunit protein bL27 (Staphylococcus epidermidis (strain ATCC 35984 / DSM 28319 / BCRC 17069 / CCUG 31568 / BM 3577 / RP62A)).